The primary structure comprises 335 residues: MPGPAVDAEKVPFRSAKEEIRAGVGVEGSEGGGGGGGRERPGARGHRQDIVWRNVFLMSLLHLAAVYSLVLIPKAQPLTLLWAYFCFLLTALGVTAGAHRLWSHRSYKAKLPLRIFLAAANSMAFQNDIFEWSRDHRVHHKYSETDADPHNARRGFFFSHIGWLFVRKHRDVIEKGRKLDVTDLLADPVVRFQRKYYKITVVLMCFVVPTLVPWYIWGESLWNSYFLASILRYTISLNVTWLVNSVAHMYGNRPYDKHISPRQNPLVTLGAIGEGFHNYHHTFPFDYSASEFGLNFNPTTWFIDFMCWLGLATDRKRATKQMIEARKARTGDGSA.

Residues 1–54 (MPGPAVDAEKVPFRSAKEEIRAGVGVEGSEGGGGGGGRERPGARGHRQDIVWRN) lie on the Cytoplasmic side of the membrane. The disordered stretch occupies residues 24–44 (VGVEGSEGGGGGGGRERPGAR). Gly residues predominate over residues 25-36 (GVEGSEGGGGGG). N54 serves as a coordination point for substrate. A helical membrane pass occupies residues 55–75 (VFLMSLLHLAAVYSLVLIPKA). Topologically, residues 76–77 (QP) are lumenal. A helical membrane pass occupies residues 78–98 (LTLLWAYFCFLLTALGVTAGA). The Fe cation site is built by H99 and H104. Positions 99-104 (HRLWSH) match the Histidine box-1 motif. Residues 99 to 198 (HRLWSHRSYK…VVRFQRKYYK (100 aa)) are Cytoplasmic-facing. Positions 127, 134, and 135 each coordinate substrate. Fe cation-binding residues include H136, H139, and H140. A Histidine box-2 motif is present at residues 136 to 140 (HRVHH). Residues R167 and K168 each contribute to the substrate site. The helical transmembrane segment at 199–219 (ITVVLMCFVVPTLVPWYIWGE) threads the bilayer. Over 220 to 227 (SLWNSYFL) the chain is Lumenal. Residues 228–247 (ASILRYTISLNVTWLVNSVA) traverse the membrane as a helical segment. W241 serves as a coordination point for substrate. Fe cation is bound by residues H248, H277, H280, and H281. Topologically, residues 248–335 (HMYGNRPYDK…RKARTGDGSA (88 aa)) are cytoplasmic. Positions 277 to 281 (HNYHH) match the Histidine box-3 motif.

The protein belongs to the fatty acid desaturase type 1 family. In terms of assembly, may self-associate and form homodimers. The cofactor is Fe(2+). In terms of tissue distribution, detected in brain.

The protein resides in the endoplasmic reticulum membrane. The catalysed reaction is octadecanoyl-CoA + 2 Fe(II)-[cytochrome b5] + O2 + 2 H(+) = (9Z)-octadecenoyl-CoA + 2 Fe(III)-[cytochrome b5] + 2 H2O. It catalyses the reaction hexadecanoyl-CoA + 2 Fe(II)-[cytochrome b5] + O2 + 2 H(+) = (9Z)-hexadecenoyl-CoA + 2 Fe(III)-[cytochrome b5] + 2 H2O. Stearoyl-CoA desaturase that utilizes O(2) and electrons from reduced cytochrome b5 to introduce the first double bond into saturated fatty acyl-CoA substrates. Catalyzes the insertion of a cis double bond at the delta-9 position into fatty acyl-CoA substrates including palmitoyl-CoA and stearoyl-CoA. Gives rise to a mixture of 16:1 and 18:1 unsaturated fatty acids. Involved in neuronal cell proliferation and differentiation through down-regulation of EGFR/AKT/MAPK and Wnt signaling pathways. The polypeptide is Stearoyl-CoA desaturase 5 (SCD5) (Bos taurus (Bovine)).